We begin with the raw amino-acid sequence, 536 residues long: MATRAQPGPLSQAGSAGVAALATVGVASGPGPGRPGPLQDETLGVASVPSQWRAVQGIRWETKSCQTASIATASASAQARNHVDAQVQTEAPVPVSVQPPSQYDIPRLAAFLRRVEAMVIRELNKNWQSHAFDGFEVNWTEQQQMVSCLYTLGYPPAQAQGLHVTSISWNSTGSVVACAYGRLDHGDWSTLKSFVCAWNLDRRDLRPQQPSAVVEVPSAVLCLAFHPTQPSHVAGGLYSGEVLVWDLSRLEDPLLWRTGLTDDTHTDPVSQVVWLPEPGHSHRFQVLSVATDGKVLLWQGIGVGQLQLTEGFALVMQQLPRSTKLKKHPRGETEVGATAVAFSSFDPRLFILGTEGGFPLKCSLAAGEAALTRMPSSVPLRAPAQFTFSPHGGPIYSVSCSPFHRNLFLSAGTDGHVHLYSMLQAPPLTSLQLSLKYLFAVRWSPVRPLVFAAASGKGDVQLFDLQKSSQKPTVLIKQTQDESPVYCLEFNSQQTQLLAAGDAQGTVKVWQLSTEFTEQGPREAEDLDCLAAEVAA.

Ser15 is subject to Phosphoserine. Residues 80–93 form a DYNLL2 binding region; that stretch reads RNHVDAQVQTEAPV. The segment at 106 to 131 is DYNLRB1 binding; the sequence is PRLAAFLRRVEAMVIRELNKNWQSHA. WD repeat units lie at residues 215–255, 264–308, 390–430, 433–473, and 480–520; these read EVPS…DPLL, THTD…QLQL, PHGG…PLTS, LSLK…QKPT, and QDES…TEQG.

This sequence belongs to the dynein light intermediate chain family. As to quaternary structure, the cytoplasmic dynein 2 complex consists of two catalytic heavy chains (HCs) and a number of non-catalytic subunits presented by intermediate chains (ICs), light intermediate chains (LICs) and light chains (LCs). Among them, a heavy chain (DYNC2H1), two intermediate chains (DYNC2I2 and DYNC2I1), a light intermediate chain (DYNC2LI1), and a light chain (DYNLT2B) are unique to the cytoplasmic dynein complex 2, but a subset of the light chains are also shared by dynein-1 and dynein-2 complexes. Interacts with DYNC2I1; their C-terminal domains each bind a copy of the heavy chain, and their extended N-terminal regions are held together by an array of light chain dimers. Interacts with DYNLL2; this interaction is essential for dynein-2-mediated retrograde trafficking of ciliary proteins. Interacts with DYNLRB1; this interaction is essential for dynein-2-mediated retrograde trafficking of ciliary proteins. Interacts (via the WD domains) with MAP3K7 and TAB3. Interacts (via WD domains) with TAB2 (via C-terminus). Interacts (via WD domains) with TRAF6 (via TRAF-type domains). In terms of tissue distribution, expressed in several cell lines (at protein level).

It localises to the cytoplasm. The protein localises to the cytoskeleton. Its subcellular location is the cilium basal body. The protein resides in the cilium axoneme. It is found in the microtubule organizing center. It localises to the centrosome. The protein localises to the cell projection. Its subcellular location is the cilium. The protein resides in the filopodium. Functionally, acts as one of several non-catalytic accessory components of the cytoplasmic dynein 2 complex (dynein-2 complex), a motor protein complex that drives the movement of cargos along microtubules within cilia and flagella in concert with the intraflagellar transport (IFT) system. DYNC2I2 plays a major role in retrograde ciliary protein trafficking and in ciliogenesis. Required also to maintain a functional transition zone. In terms of biological role, acts as a negative regulator of the Toll-like and IL-1R receptor signaling pathways. Inhibits the MAP3K7-induced NF-kappa-B activation pathway. Inhibits MAP3K7 phosphorylation at 'Thr-184' and 'Thr-187' upon Il-1 beta stimulation. The protein is Cytoplasmic dynein 2 intermediate chain 2 of Homo sapiens (Human).